Consider the following 363-residue polypeptide: Cleavage and termination factor 1 (363 aa).

The 79-residue stretch at 7-85 (NVVFVGNIPY…RKIRVEFPSN (79 aa)) folds into the RRM domain. The tract at residues 291 to 325 (QPASATSSPPSVPQKIPSSNHKSQQANGSDQGNEG) is disordered. Positions 306 to 322 (IPSSNHKSQQANGSDQG) are enriched in polar residues.

In terms of assembly, interacts with res2.

The protein localises to the nucleus. In terms of biological role, component of the cleavage factor I (CF I) involved in pre-mRNA 3'-end processing. The sequence is that of Cleavage and termination factor 1 (ctf1) from Schizosaccharomyces pombe (strain 972 / ATCC 24843) (Fission yeast).